A 236-amino-acid chain; its full sequence is MATPHINAVEGAFAETVLFPGDPLRAKYIAETFLENVEQVTDVRNMLGFTGTYKGKRISVMGSGMGIPSCSIYATELIKDYGVKNLIRVGTCGAISTDVKVRDVIIGMGACTDSQVNRLRFKGQDFAAIADYSLLSAVVESAKTHGIQTRVGNVFSADLFYTPDPEMFDVMEKMGVLGVEMEAAGLYGVAHEFGARALCVVTVSDHIRTGEKTTSDERQTTFNDMIIMTLDAAINL.

His-5 contacts a purine D-ribonucleoside. Residues Gly-21, Arg-25, Arg-44, and 88 to 91 contribute to the phosphate site; that span reads RVGT. Residues 180 to 182 and 204 to 205 each bind a purine D-ribonucleoside; these read EME and SD. Catalysis depends on Asp-205, which acts as the Proton donor.

This sequence belongs to the PNP/UDP phosphorylase family. As to quaternary structure, homohexamer; trimer of homodimers.

The catalysed reaction is a purine D-ribonucleoside + phosphate = a purine nucleobase + alpha-D-ribose 1-phosphate. It catalyses the reaction a purine 2'-deoxy-D-ribonucleoside + phosphate = a purine nucleobase + 2-deoxy-alpha-D-ribose 1-phosphate. Catalyzes the reversible phosphorolytic breakdown of the N-glycosidic bond in the beta-(deoxy)ribonucleoside molecules, with the formation of the corresponding free purine bases and pentose-1-phosphate. The sequence is that of Purine nucleoside phosphorylase DeoD-type from Shewanella amazonensis (strain ATCC BAA-1098 / SB2B).